The sequence spans 233 residues: Flagellar calcium-binding protein TB-17 (233 aa).

Residues 1–11 (MGCSGSKNASN) show a composition bias toward polar residues. The tract at residues 1–29 (MGCSGSKNASNPKDGAASKGGKDGKTTAD) is disordered. The segment covering 20–29 (GGKDGKTTAD) has biased composition (basic and acidic residues). EF-hand domains follow at residues 48–83 (ESKSRRIELFKQFDTNGTGKLGFREVLDGCYSILKL), 130–165 (YDIFELTVIFDTMDKDGSLLLELHEFKEALPKLKEW), and 167–202 (VDITDATTVFNEIDTNGSGVVTFDEFSCWAVTKKLQ). Positions 61, 63, 65, 67, 72, 143, 145, 147, 154, 180, 182, 184, and 191 each coordinate Ca(2+). The interval 203–233 (VSGDPDDEENGANEGDGANAGDGVPAAEGSA) is disordered. A compositionally biased stretch (low complexity) spans 214 to 225 (ANEGDGANAGDG).

The protein belongs to the calflagin family.

It localises to the cell projection. The protein localises to the cilium. The protein resides in the flagellum. In terms of biological role, may contribute to the rapid motility of the trypanosomes, playing a role either in flagellar structure or in calcium metabolism. Could alternate between a GDP-bound inactive form to a calcium/GTP-bound active form. The protein is Flagellar calcium-binding protein TB-17 (FCABP) of Trypanosoma brucei brucei.